An 802-amino-acid polypeptide reads, in one-letter code: Oligophrenin-1 (802 aa).

The region spanning 265 to 368 is the PH domain; sequence QPTIEGYLYT…WMEAMDGKEP (104 aa). Residues 380-564 enclose the Rho-GAP domain; that stretch reads MELNEVGFKF…ILIEHFGKIY (185 aa). 3 disordered regions span residues 569-589, 607-770, and 783-802; these read EESA…HKPI, LDES…NAGE, and FETA…GDES. A compositionally biased stretch (polar residues) spans 616–627; sequence HQTPNGTITSSI. The segment covering 716-732 has biased composition (basic and acidic residues); that stretch reads HHKEGDADSFSKVRPPG.

In terms of assembly, interacts with HOMER1. Interacts with AMPA receptor complexes. Interacts with SH3GL2 (endophilin-A1). Interacts (via C-terminus) with NR1D1.

It localises to the postsynapse. It is found in the presynapse. The protein resides in the cell projection. Its subcellular location is the axon. The protein localises to the dendritic spine. It localises to the dendrite. It is found in the cytoplasm. Stimulates GTP hydrolysis of members of the Rho family. Its action on RHOA activity and signaling is implicated in growth and stabilization of dendritic spines, and therefore in synaptic function. Critical for the stabilization of AMPA receptors at postsynaptic sites. Critical for the regulation of synaptic vesicle endocytosis at pre-synaptic terminals. Required for the localization of NR1D1 to dendrites, can suppress its repressor activity and protect it from proteasomal degradation. This Pan troglodytes (Chimpanzee) protein is Oligophrenin-1 (OPHN1).